The following is a 505-amino-acid chain: MYRKSTLAMLIALLTSAASAHAQTDISTIEARLNALEKRLQEAENRAQTAENRAGAAEKKVQQLTAQQQKNQNSTQEVAQRTARLEKKADDKSGFEFHGYARSGVIMNDSGASTKSGAYITPAGETGGAIGRLGNQADTYVEMNLEHKQTLDNGATTRFKVMVADGQTSYNDWTASTSDLNVRQAFVELGNLPTFAGPFKGSTLWAGKRFDRDNFDIHWIDSDVVFLAGTGGGIYDVKWNDGLRSNFSLYGRNFGDIDDSSNSVQNYILTMNHFAGPLQMMVSGLRAKDNDERKDSNGNLAKGDAANTGVHALLGLHNDSFYGLRDGSSKTALLYGHGLGAEVKGIGSDGALRPGADTWRIASYGTTPLSENWSVAPAMLAQRSKDRYADGDSYQWATFNLRLIQAINQNFALAYEGSYQYMDLKPEGYNDRQAVNGSFYKLTFAPTFKVGSIGDFFSRPEIRFYTSWMDWSKKLNNYASDDALGSDGFNSGGEWSFGVQMETWF.

A signal peptide spans 1–22 (MYRKSTLAMLIALLTSAASAHA). The segment at 44–87 (ENRAQTAENRAGAAEKKVQQLTAQQQKNQNSTQEVAQRTARLEK) is disordered. The segment covering 62–72 (QQLTAQQQKNQ) has biased composition (low complexity).

The protein belongs to the porin LamB (TC 1.B.3) family. As to quaternary structure, homotrimer.

It localises to the cell outer membrane. Functionally, porin for sucrose uptake. The chain is Sucrose porin (scrY) from Salmonella typhimurium.